A 93-amino-acid polypeptide reads, in one-letter code: UPF0367 protein gsr3177 (93 aa).

This sequence belongs to the UPF0367 family.

The polypeptide is UPF0367 protein gsr3177 (Gloeobacter violaceus (strain ATCC 29082 / PCC 7421)).